The following is a 246-amino-acid chain: NLP effector protein 2 (246 aa).

The N-terminal stretch at 1–19 (MKFVVFLCAIAAVVATIQG) is a signal peptide. The Conserved undecapeptide motif I motif lies at 113–123 (AIMYSWYFPKD). The short motif at 130-136 (GHRHDWE) is the Hepta-peptide GHRHDWE motif II element.

The protein belongs to the Necrosis inducing protein (NPP1) family.

It localises to the secreted. Secreted effector that contributes strongly to virulence during infection by P.capsici. Causes large necrotic areas in both host C.annuum and non-host N.benthamiana. The chain is NLP effector protein 2 from Phytophthora capsici.